Reading from the N-terminus, the 298-residue chain is ATP phosphoribosyltransferase (298 aa).

This sequence belongs to the ATP phosphoribosyltransferase family. Long subfamily. Mg(2+) is required as a cofactor.

It localises to the cytoplasm. The enzyme catalyses 1-(5-phospho-beta-D-ribosyl)-ATP + diphosphate = 5-phospho-alpha-D-ribose 1-diphosphate + ATP. It participates in amino-acid biosynthesis; L-histidine biosynthesis; L-histidine from 5-phospho-alpha-D-ribose 1-diphosphate: step 1/9. Feedback inhibited by histidine. In terms of biological role, catalyzes the condensation of ATP and 5-phosphoribose 1-diphosphate to form N'-(5'-phosphoribosyl)-ATP (PR-ATP). Has a crucial role in the pathway because the rate of histidine biosynthesis seems to be controlled primarily by regulation of HisG enzymatic activity. The protein is ATP phosphoribosyltransferase of Aeromonas salmonicida (strain A449).